Here is an 870-residue protein sequence, read N- to C-terminus: Phenylalanine--tRNA ligase beta subunit (870 aa).

The tRNA-binding domain occupies A39–T148. The 125-residue stretch at P427 to S551 folds into the B5 domain. Residues L450–I498 enclose the RPE1 insert domain. Mg(2+) is bound by residues D529, D535, E538, and E539. An FDX-ACB domain is found at S776–R869.

The protein belongs to the phenylalanyl-tRNA synthetase beta subunit family. Type 1 subfamily. As to quaternary structure, tetramer of two alpha and two beta subunits. The cofactor is Mg(2+).

It localises to the cytoplasm. It carries out the reaction tRNA(Phe) + L-phenylalanine + ATP = L-phenylalanyl-tRNA(Phe) + AMP + diphosphate + H(+). This Rickettsia bellii (strain RML369-C) protein is Phenylalanine--tRNA ligase beta subunit (pheT).